A 379-amino-acid polypeptide reads, in one-letter code: Carbamoyl phosphate synthase small chain (379 aa).

The tract at residues M1–S187 is CPSase. L-glutamine is bound by residues S48, G239, and G241. Residues K191–R378 enclose the Glutamine amidotransferase type-1 domain. C267 acts as the Nucleophile in catalysis. Positions 268, 271, 309, 311, and 312 each coordinate L-glutamine. Catalysis depends on residues H351 and E353.

The protein belongs to the CarA family. In terms of assembly, composed of two chains; the small (or glutamine) chain promotes the hydrolysis of glutamine to ammonia, which is used by the large (or ammonia) chain to synthesize carbamoyl phosphate. Tetramer of heterodimers (alpha,beta)4.

It carries out the reaction hydrogencarbonate + L-glutamine + 2 ATP + H2O = carbamoyl phosphate + L-glutamate + 2 ADP + phosphate + 2 H(+). It catalyses the reaction L-glutamine + H2O = L-glutamate + NH4(+). It participates in amino-acid biosynthesis; L-arginine biosynthesis; carbamoyl phosphate from bicarbonate: step 1/1. It functions in the pathway pyrimidine metabolism; UMP biosynthesis via de novo pathway; (S)-dihydroorotate from bicarbonate: step 1/3. In terms of biological role, small subunit of the glutamine-dependent carbamoyl phosphate synthetase (CPSase). CPSase catalyzes the formation of carbamoyl phosphate from the ammonia moiety of glutamine, carbonate, and phosphate donated by ATP, constituting the first step of 2 biosynthetic pathways, one leading to arginine and/or urea and the other to pyrimidine nucleotides. The small subunit (glutamine amidotransferase) binds and cleaves glutamine to supply the large subunit with the substrate ammonia. This chain is Carbamoyl phosphate synthase small chain, found in Thioalkalivibrio sulfidiphilus (strain HL-EbGR7).